A 65-amino-acid polypeptide reads, in one-letter code: Large ribosomal subunit protein uL29 (65 aa).

Belongs to the universal ribosomal protein uL29 family.

The polypeptide is Large ribosomal subunit protein uL29 (Dehalococcoides mccartyi (strain ATCC BAA-2266 / KCTC 15142 / 195) (Dehalococcoides ethenogenes (strain 195))).